The primary structure comprises 270 residues: Phosphatidylglycerol--prolipoprotein diacylglyceryl transferase (270 aa).

4 helical membrane passes run 19–39 (FPVY…LWLA), 54–74 (IDLV…YYVI), 92–112 (QGGL…ILFA), and 116–136 (GLSF…GQAI). A 1,2-diacyl-sn-glycero-3-phospho-(1'-sn-glycerol) is bound at residue arginine 138. A run of 3 helical transmembrane segments spans residues 178-198 (HPTF…LLAL), 206-226 (GELF…VEGL), and 236-256 (LRIA…FIIV).

This sequence belongs to the Lgt family.

It is found in the cell membrane. The catalysed reaction is L-cysteinyl-[prolipoprotein] + a 1,2-diacyl-sn-glycero-3-phospho-(1'-sn-glycerol) = an S-1,2-diacyl-sn-glyceryl-L-cysteinyl-[prolipoprotein] + sn-glycerol 1-phosphate + H(+). It participates in protein modification; lipoprotein biosynthesis (diacylglyceryl transfer). Its function is as follows. Catalyzes the transfer of the diacylglyceryl group from phosphatidylglycerol to the sulfhydryl group of the N-terminal cysteine of a prolipoprotein, the first step in the formation of mature lipoproteins. This chain is Phosphatidylglycerol--prolipoprotein diacylglyceryl transferase, found in Bacillus mycoides (strain KBAB4) (Bacillus weihenstephanensis).